The sequence spans 454 residues: Bifunctional protein GlmU (454 aa).

The interval 1 to 232 (MTDRTCLSIV…VDNVIGINNR (232 aa)) is pyrophosphorylase. UDP-N-acetyl-alpha-D-glucosamine contacts are provided by residues 11–14 (LAAG), Lys-25, Gln-78, and 83–84 (GT). Asp-108 lines the Mg(2+) pocket. UDP-N-acetyl-alpha-D-glucosamine is bound by residues Gly-144, Glu-158, Asn-173, and Asn-230. Asn-230 provides a ligand contact to Mg(2+). A linker region spans residues 233–253 (AELAEAETIWQNRKRRELMLS). Residues 254–454 (GVTLIAPETV…AIKAAKSVSK (201 aa)) form an N-acetyltransferase region. UDP-N-acetyl-alpha-D-glucosamine contacts are provided by Arg-319 and Lys-337. Catalysis depends on His-349, which acts as the Proton acceptor. UDP-N-acetyl-alpha-D-glucosamine-binding residues include Tyr-352 and Asn-363. Residues Ala-366, 372-373 (NY), Ser-391, Ser-409, and Arg-426 contribute to the acetyl-CoA site.

The protein in the N-terminal section; belongs to the N-acetylglucosamine-1-phosphate uridyltransferase family. This sequence in the C-terminal section; belongs to the transferase hexapeptide repeat family. Homotrimer. Mg(2+) is required as a cofactor.

The protein resides in the cytoplasm. It carries out the reaction alpha-D-glucosamine 1-phosphate + acetyl-CoA = N-acetyl-alpha-D-glucosamine 1-phosphate + CoA + H(+). The enzyme catalyses N-acetyl-alpha-D-glucosamine 1-phosphate + UTP + H(+) = UDP-N-acetyl-alpha-D-glucosamine + diphosphate. The protein operates within nucleotide-sugar biosynthesis; UDP-N-acetyl-alpha-D-glucosamine biosynthesis; N-acetyl-alpha-D-glucosamine 1-phosphate from alpha-D-glucosamine 6-phosphate (route II): step 2/2. It participates in nucleotide-sugar biosynthesis; UDP-N-acetyl-alpha-D-glucosamine biosynthesis; UDP-N-acetyl-alpha-D-glucosamine from N-acetyl-alpha-D-glucosamine 1-phosphate: step 1/1. It functions in the pathway bacterial outer membrane biogenesis; LPS lipid A biosynthesis. In terms of biological role, catalyzes the last two sequential reactions in the de novo biosynthetic pathway for UDP-N-acetylglucosamine (UDP-GlcNAc). The C-terminal domain catalyzes the transfer of acetyl group from acetyl coenzyme A to glucosamine-1-phosphate (GlcN-1-P) to produce N-acetylglucosamine-1-phosphate (GlcNAc-1-P), which is converted into UDP-GlcNAc by the transfer of uridine 5-monophosphate (from uridine 5-triphosphate), a reaction catalyzed by the N-terminal domain. The sequence is that of Bifunctional protein GlmU from Brucella abortus (strain S19).